The chain runs to 271 residues: Mannosyl-3-phosphoglycerate phosphatase (271 aa).

Asp13 functions as the Nucleophile in the catalytic mechanism. The Mg(2+) site is built by Asp13, Asp15, and Asp214.

The protein belongs to the HAD-like hydrolase superfamily. MPGP family. It depends on Mg(2+) as a cofactor.

It is found in the cytoplasm. The enzyme catalyses 2-O-(alpha-D-mannosyl)-3-phosphoglycerate + H2O = (2R)-2-O-(alpha-D-mannosyl)-glycerate + phosphate. The sequence is that of Mannosyl-3-phosphoglycerate phosphatase (yedP) from Shigella dysenteriae serotype 1 (strain Sd197).